Reading from the N-terminus, the 190-residue chain is Elongation factor P-like protein (190 aa).

The protein belongs to the elongation factor P family.

The polypeptide is Elongation factor P-like protein (Marinomonas sp. (strain MWYL1)).